The primary structure comprises 730 residues: Nitrogen fixation protein FixI (730 aa).

Topologically, residues methionine 1 to arginine 101 are cytoplasmic. Positions lysine 19 to tyrosine 85 constitute an HMA domain. A metal cation-binding residues include cysteine 30 and cysteine 33. Residues phenylalanine 102–proline 123 traverse the membrane as a helical segment. At valine 124–aspartate 138 the chain is on the extracellular side. The chain crosses the membrane as a helical span at residues phenylalanine 139–serine 162. Topologically, residues alanine 163–serine 168 are cytoplasmic. A helical transmembrane segment spans residues alanine 169–valine 190. Residues valine 191 to phenylalanine 202 are Extracellular-facing. Residues aspartate 203–arginine 223 traverse the membrane as a helical segment. Residues arginine 224–arginine 352 are Cytoplasmic-facing. The helical transmembrane segment at alanine 353–alanine 375 threads the bilayer. Residues glycine 376 to alanine 382 are Extracellular-facing. Residues isoleucine 383–leucine 400 form a helical membrane-spanning segment. Residues alanine 401–methionine 676 are Cytoplasmic-facing. Aspartate 438 functions as the 4-aspartylphosphate intermediate in the catalytic mechanism. The Mg(2+) site is built by aspartate 622 and aspartate 626. Residues arginine 677–serine 696 traverse the membrane as a helical segment. At glycine 697 to proline 701 the chain is on the extracellular side. Residues leucine 702–leucine 720 traverse the membrane as a helical segment. At arginine 721 to valine 730 the chain is on the cytoplasmic side.

This sequence belongs to the cation transport ATPase (P-type) (TC 3.A.3) family. Type IB subfamily.

The protein localises to the cell membrane. It carries out the reaction ATP + H2O = ADP + phosphate + H(+). Its function is as follows. FixI is a pump of a specific cation involved in symbiotic nitrogen fixation. The four proteins FixG, FixH, FixI, and FixS may participate in a membrane-bound complex coupling the FixI cation pump with a redox process catalyzed by FixG. This is Nitrogen fixation protein FixI (fixI) from Bradyrhizobium diazoefficiens (strain JCM 10833 / BCRC 13528 / IAM 13628 / NBRC 14792 / USDA 110).